A 391-amino-acid chain; its full sequence is Coiled-coil domain-containing protein 85C-A (391 aa).

Coiled-coil stretches lie at residues 23–87 (KCSK…ELCC) and 121–146 (FQQK…KEII). The interval 154–212 (NGAGSRSSIDSQSSLSNLNGGSATVRDVGDGSSTSSTGSAGSPDHHHSHIHKPTEGKIT) is disordered. Composition is skewed to low complexity over residues 158–175 (SRSS…NGGS) and 183–195 (DGSS…SAGS).

It belongs to the CCDC85 family.

The protein resides in the cell junction. Its subcellular location is the tight junction. It is found in the adherens junction. May play a role in cell-cell adhesion and epithelium development through its interaction with proteins of the beta-catenin family. May play an important role in cortical development, especially in the maintenance of radial glia. The protein is Coiled-coil domain-containing protein 85C-A (ccdc85ca) of Danio rerio (Zebrafish).